A 222-amino-acid polypeptide reads, in one-letter code: Cytidylate kinase (222 aa).

Position 10 to 18 (10 to 18) interacts with ATP; sequence GPAGAGKST.

The protein belongs to the cytidylate kinase family. Type 1 subfamily.

It is found in the cytoplasm. It catalyses the reaction CMP + ATP = CDP + ADP. The catalysed reaction is dCMP + ATP = dCDP + ADP. This Halalkalibacterium halodurans (strain ATCC BAA-125 / DSM 18197 / FERM 7344 / JCM 9153 / C-125) (Bacillus halodurans) protein is Cytidylate kinase.